The following is a 391-amino-acid chain: Multidrug resistance protein MdtL (391 aa).

12 consecutive transmembrane segments (helical) span residues 4–24 (FLICSFALVLLYPAGIDMYLV), 42–62 (IAFSVYLAGMAAAMLFAGKVA), 69–89 (PVAIPGAALFIIASVFCSLAE), 93–113 (LFLAGRFLQGLGAGCCYVVAF), 131–151 (LLNGITCIIPVLAPVLGHLIM), 158–178 (SLFWAMAMMGIAVLMLSLFIL), 203–222 (FFLSRVVITTLSVSVILTFV), 245–265 (ALTAGVSMTVSFSTPFALGIF), 269–289 (TLMITSQVLFLAAGITLAVSP), 293–313 (VSLFGITLICAGFSVGFGVAM), 331–351 (LGIAQVCGSSLWIWLAAVVGI), and 356–376 (MLIGILIACSIVSLLLIMFVA).

Belongs to the major facilitator superfamily. DHA1 family. MdtL (TC 2.A.1.2.22) subfamily.

The protein localises to the cell inner membrane. Functionally, confers resistance to chloramphenicol. The protein is Multidrug resistance protein MdtL of Escherichia coli (strain 55989 / EAEC).